Consider the following 46-residue polypeptide: Antimicrobial peptide eNAP-1 (46 aa).

Cystine bridges form between Cys4–Cys16 and Cys10–Cys26.

Belongs to the granulin family.

The protein resides in the secreted. Has antimicrobial activity against Gram-negative and Gram-positive bacteria. In Equus caballus (Horse), this protein is Antimicrobial peptide eNAP-1.